We begin with the raw amino-acid sequence, 369 residues long: Endophilin-A (369 aa).

Positions 18–248 (TEKMGGAEGT…LQEKRAEAES (231 aa)) constitute a BAR domain. Residues 227 to 249 (QCADVLRGLQETLQEKRAEAESR) adopt a coiled-coil conformation. Residues 275–294 (GTPSHISSSASPLPSPMRSP) show a composition bias toward low complexity. The tract at residues 275 to 297 (GTPSHISSSASPLPSPMRSPAKS) is disordered. An SH3 domain is found at 305–364 (QQQPCCQALYDFDPENPGELGFKENDIITLLNRVDDNWYEGAVNGRTGYFPQSYVQVQVP).

This sequence belongs to the endophilin family.

Its subcellular location is the cytoplasm. The protein localises to the membrane. Its function is as follows. Required presynaptically at the neuromuscular junction. Implicated in synaptic vesicle endocytosis. This Drosophila virilis (Fruit fly) protein is Endophilin-A.